A 340-amino-acid chain; its full sequence is Ferrochelatase (340 aa).

Fe cation contacts are provided by His189 and Glu292.

This sequence belongs to the ferrochelatase family.

It localises to the cytoplasm. It carries out the reaction heme b + 2 H(+) = protoporphyrin IX + Fe(2+). It functions in the pathway porphyrin-containing compound metabolism; protoheme biosynthesis; protoheme from protoporphyrin-IX: step 1/1. Its function is as follows. Catalyzes the ferrous insertion into protoporphyrin IX. This Pseudomonas aeruginosa (strain LESB58) protein is Ferrochelatase.